Consider the following 289-residue polypeptide: MSFKDRLFICSQYLLPHHLLSRLIGFAADCRATWFKDRLIAWFARRYQVDMREAQVEDLQAFEHFNAFFTRALKDGARPLAQEPGAVLCPADGAISQLGPIEHGRIFQAKGHSYSLAELLGGDAELAAPFMGGDFATVYLSPRDYHRVHMPLAGTLREMVYVPGRLFSVNQTTAENVPELFARNERVVCLFDTERGPMAVVLVGAMIVASIETVWAGLVTPPKRELKTFRYDEAARAPIRLEKGAELGRFKLGSTAIVLFGPQQVAFNDGLGAASPVRMGECLALPKQS.

Residues Asp-92, His-149, and Ser-254 each act as charge relay system; for autoendoproteolytic cleavage activity in the active site. The active-site Schiff-base intermediate with substrate; via pyruvic acid; for decarboxylase activity is Ser-254. A Pyruvic acid (Ser); by autocatalysis modification is found at Ser-254.

This sequence belongs to the phosphatidylserine decarboxylase family. PSD-B subfamily. Prokaryotic type I sub-subfamily. In terms of assembly, heterodimer of a large membrane-associated beta subunit and a small pyruvoyl-containing alpha subunit. It depends on pyruvate as a cofactor. In terms of processing, is synthesized initially as an inactive proenzyme. Formation of the active enzyme involves a self-maturation process in which the active site pyruvoyl group is generated from an internal serine residue via an autocatalytic post-translational modification. Two non-identical subunits are generated from the proenzyme in this reaction, and the pyruvate is formed at the N-terminus of the alpha chain, which is derived from the carboxyl end of the proenzyme. The autoendoproteolytic cleavage occurs by a canonical serine protease mechanism, in which the side chain hydroxyl group of the serine supplies its oxygen atom to form the C-terminus of the beta chain, while the remainder of the serine residue undergoes an oxidative deamination to produce ammonia and the pyruvoyl prosthetic group on the alpha chain. During this reaction, the Ser that is part of the protease active site of the proenzyme becomes the pyruvoyl prosthetic group, which constitutes an essential element of the active site of the mature decarboxylase.

The protein localises to the cell membrane. It carries out the reaction a 1,2-diacyl-sn-glycero-3-phospho-L-serine + H(+) = a 1,2-diacyl-sn-glycero-3-phosphoethanolamine + CO2. It functions in the pathway phospholipid metabolism; phosphatidylethanolamine biosynthesis; phosphatidylethanolamine from CDP-diacylglycerol: step 2/2. Functionally, catalyzes the formation of phosphatidylethanolamine (PtdEtn) from phosphatidylserine (PtdSer). The sequence is that of Phosphatidylserine decarboxylase proenzyme from Pseudomonas aeruginosa (strain ATCC 15692 / DSM 22644 / CIP 104116 / JCM 14847 / LMG 12228 / 1C / PRS 101 / PAO1).